Reading from the N-terminus, the 930-residue chain is Isoleucine--tRNA ligase (930 aa).

Residues 57-67 (PYANGHLHIGH) carry the 'HIGH' region motif. L-isoleucyl-5'-AMP is bound at residue glutamate 573. The 'KMSKS' region motif lies at 614 to 618 (KMSKS). Lysine 617 contacts ATP. Cysteine 902, cysteine 905, cysteine 918, and cysteine 921 together coordinate Zn(2+).

It belongs to the class-I aminoacyl-tRNA synthetase family. IleS type 1 subfamily. In terms of assembly, monomer. Zn(2+) is required as a cofactor.

It is found in the cytoplasm. The catalysed reaction is tRNA(Ile) + L-isoleucine + ATP = L-isoleucyl-tRNA(Ile) + AMP + diphosphate. Its function is as follows. Catalyzes the attachment of isoleucine to tRNA(Ile). As IleRS can inadvertently accommodate and process structurally similar amino acids such as valine, to avoid such errors it has two additional distinct tRNA(Ile)-dependent editing activities. One activity is designated as 'pretransfer' editing and involves the hydrolysis of activated Val-AMP. The other activity is designated 'posttransfer' editing and involves deacylation of mischarged Val-tRNA(Ile). The sequence is that of Isoleucine--tRNA ligase from Helicobacter hepaticus (strain ATCC 51449 / 3B1).